The sequence spans 3073 residues: Adhesion G-protein coupled receptor G4 (3073 aa).

Positions 1 to 25 are cleaved as a signal peptide; it reads MRKHILHQRLCGLILVSSFIFLTDS. The Extracellular portion of the chain corresponds to 26 to 2691; that stretch reads LSLKGKRLDF…RSTVDAVNER (2666 aa). Residues 29–228 enclose the Pentraxin (PTX) domain; it reads KGKRLDFYGE…SPTVDRRLRC (200 aa). Intrachain disulfides connect C58–C123 and C200–C228. N-linked (GlcNAc...) asparagine glycosylation occurs at N233. The tract at residues 253–272 is disordered; the sequence is SQTTGLNPHKTSHSSTLLPE. N-linked (GlcNAc...) asparagine glycosylation is present at N662. Composition is skewed to polar residues over residues 671-696 and 929-951; these read GNAT…ESKV and GNSA…SSST. Disordered stretches follow at residues 671–697 and 924–951; these read GNAT…SKVT and SEKS…SSST. N-linked (GlcNAc...) asparagine glycosylation is found at N1141, N1304, and N1495. Disordered stretches follow at residues 1565–1595, 1741–1760, and 1945–1972; these read FTSS…AGPT, TLTN…STPT, and ITLS…SDSR. A compositionally biased stretch (polar residues) spans 1945 to 1954; that stretch reads ITLSSNPSVN. A compositionally biased stretch (low complexity) spans 1955 to 1972; sequence SRATSPTWSSSSLPSDSR. The GAIN-B domain maps to 2535–2684; it reads SSEEVIAPQI…GVLMDLSRST (150 aa). 2 cysteine pairs are disulfide-bonded: C2635-C2666 and C2654-C2668. The tract at residues 2635 to 2684 is GPS; that stretch reads CAFWDFDTNNGLGGWNPSGCKLKESNINYTICQCNHLTHFGVLMDLSRST. The tract at residues 2673-2684 is stachel; sequence HFGVLMDLSRST. Residues 2692 to 2712 traverse the membrane as a helical segment; sequence ILVIITYTGCGISSIFLGIAM. The Cytoplasmic segment spans residues 2713–2728; that stretch reads VTYIAFHKLRKDYPSK. Residues 2729-2749 form a helical membrane-spanning segment; sequence ILINLCTALLMLNLAFLVNSW. The Extracellular portion of the chain corresponds to 2750–2755; sequence LTSFQK. A helical membrane pass occupies residues 2756-2776; the sequence is VGLCITAAVALHYFLLVSLTW. An intrachain disulfide couples C2759 to C2836. Topologically, residues 2777–2798 are cytoplasmic; the sequence is MGLEAVHMYFALVKVFNTYIPN. A helical transmembrane segment spans residues 2799–2819; that stretch reads YILKFCLAGWGIPAITVAIIL. Over 2820–2842 the chain is Extracellular; it reads SVRKDLYGTLSPTTPFCWIKDDH. Residues 2843 to 2863 traverse the membrane as a helical segment; it reads IFYISVVAYFCLIFLMNLSMF. Residues 2864–2892 are Cytoplasmic-facing; that stretch reads CTVLVQLTSVKSQSQKTRKKMILNDLKGT. The helical transmembrane segment at 2893–2913 threads the bilayer; the sequence is ISLTFLLGLTWGFAFFAWGPV. R2914 is a topological domain (extracellular). The helical transmembrane segment at 2915-2935 threads the bilayer; that stretch reads IFFLYLFAICNTLQGFLIFVF. Residues 2936-3073 lie on the Cytoplasmic side of the membrane; that stretch reads YCVMKESVRE…SSGLGEMFNL (138 aa).

Belongs to the G-protein coupled receptor 2 family. Adhesion G-protein coupled receptor (ADGR) subfamily. Homodimer; homodimerizes via its Pentraxin domain in a calcium-independent manner. Heterodimer of 2 chains generated by proteolytic processing; the large extracellular N-terminal fragment and the membrane-bound C-terminal fragment predominantly remain associated and non-covalently linked. Autoproteolytically processed at the GPS region of the GAIN-B domain; this cleavage modulates receptor activity.

The protein localises to the membrane. Its activity is regulated as follows. Forms a heterodimer of 2 chains generated by proteolytic processing that remain associated through non-covalent interactions mediated by the GAIN-B domain. In the inactivated receptor, the Stachel sequence (also named stalk) is embedded in the GAIN-B domain, where it adopts a beta-strand conformation. On activation, the Stachel moves into the 7 transmembrane region and adopts a twisted hook-shaped configuration that forms contacts within the receptor, leading to coupling of a G-alpha protein, which activates signaling. The cleaved GAIN-B and N-terminal domains can then dissociate from the rest of the receptor. Functionally, orphan adhesion G-protein coupled receptor (aGPCR). Ligand binding causes a conformation change that triggers signaling via guanine nucleotide-binding proteins (G proteins) and modulates the activity of downstream effectors, such as adenylate cyclase. ADGRG4 is coupled to G(s) G proteins and mediates activation of adenylate cyclase activity. May be act as sensor of mechanical forces. The protein is Adhesion G-protein coupled receptor G4 of Mus musculus (Mouse).